The chain runs to 209 residues: Ribosomal RNA small subunit methyltransferase G (209 aa).

S-adenosyl-L-methionine is bound by residues Gly-71, Phe-76, 122–123 (AE), and Arg-135.

The protein belongs to the methyltransferase superfamily. RNA methyltransferase RsmG family.

It is found in the cytoplasm. Its function is as follows. Specifically methylates the N7 position of a guanine in 16S rRNA. The protein is Ribosomal RNA small subunit methyltransferase G of Flavobacterium psychrophilum (strain ATCC 49511 / DSM 21280 / CIP 103535 / JIP02/86).